Consider the following 97-residue polypeptide: UPF0235 protein APL_1380 (97 aa).

The protein belongs to the UPF0235 family.

In Actinobacillus pleuropneumoniae serotype 5b (strain L20), this protein is UPF0235 protein APL_1380.